Consider the following 435-residue polypeptide: Nuclear hormone receptor family member nhr-14 (435 aa).

A DNA-binding region (nuclear receptor) is located at residues A17–N92. NR C4-type zinc fingers lie at residues C20 to C40 and C56 to C80. Residues Q91–V126 form a disordered region. Residues G107–T119 are compositionally biased toward polar residues. The NR LBD domain maps to V131–E355.

The protein belongs to the nuclear hormone receptor family. As to expression, expressed in intestine and head neurons in young adults.

It is found in the nucleus. In terms of biological role, orphan nuclear receptor. Transcriptional repressor of intestinal metal transporter smf-3 and genes of the innate immune response. Inhibits nuclear localization of transcription factor pqm-1; in response to pathogen stress, may facilitate translocation of pqm-1, leading to transcriptional activation of genes involved in innate immunity and iron uptake. The protein is Nuclear hormone receptor family member nhr-14 (nhr-14) of Caenorhabditis elegans.